Here is a 403-residue protein sequence, read N- to C-terminus: Queuine tRNA-ribosyltransferase catalytic subunit 1 (403 aa).

Alanine 2 carries the post-translational modification N-acetylalanine. Catalysis depends on aspartate 105, which acts as the Proton acceptor. 105 to 109 (DSGGF) is a queuine binding site. Serine 139 carries the phosphoserine modification. Residues aspartate 159, glutamine 202, and glycine 229 each coordinate queuine. The tract at residues 260–266 (GVGYATD) is RNA binding. Aspartate 279 (nucleophile) is an active-site residue. The segment at 284–288 (TRTAR) is RNA binding; important for wobble base 34 recognition. The Zn(2+) site is built by cysteine 317, cysteine 319, cysteine 322, and histidine 348.

This sequence belongs to the queuine tRNA-ribosyltransferase family. As to quaternary structure, heterodimer of a catalytic subunit QTRT1 and an accessory subunit QTRT2. Zn(2+) serves as cofactor. As to expression, expressed in brain, heart, kidney, liver, ling, skeletal muscle, spleen and testis.

It is found in the cytoplasm. The protein resides in the mitochondrion outer membrane. It localises to the nucleus. It catalyses the reaction guanosine(34) in tRNA + queuine = queuosine(34) in tRNA + guanine. Catalytic subunit of the queuine tRNA-ribosyltransferase (TGT) that catalyzes the base-exchange of a guanine (G) residue with queuine (Q) at position 34 (anticodon wobble position) in tRNAs with GU(N) anticodons (tRNA-Asp, -Asn, -His and -Tyr), resulting in the hypermodified nucleoside queuosine (7-(((4,5-cis-dihydroxy-2-cyclopenten-1-yl)amino)methyl)-7-deazaguanosine). Catalysis occurs through a double-displacement mechanism. The nucleophile active site attacks the C1' of nucleotide 34 to detach the guanine base from the RNA, forming a covalent enzyme-RNA intermediate. The proton acceptor active site deprotonates the incoming queuine, allowing a nucleophilic attack on the C1' of the ribose to form the product. Modification of cytoplasmic tRNAs with queuosine controls the elongation speed of cognate codons, thereby ensuring the correct folding of nascent proteins to maintain proteome integrity. This is Queuine tRNA-ribosyltransferase catalytic subunit 1 from Mus musculus (Mouse).